The following is a 376-amino-acid chain: Lipid-A-disaccharide synthase (376 aa).

It belongs to the LpxB family.

The catalysed reaction is a lipid X + a UDP-2-N,3-O-bis[(3R)-3-hydroxyacyl]-alpha-D-glucosamine = a lipid A disaccharide + UDP + H(+). It participates in bacterial outer membrane biogenesis; LPS lipid A biosynthesis. Functionally, condensation of UDP-2,3-diacylglucosamine and 2,3-diacylglucosamine-1-phosphate to form lipid A disaccharide, a precursor of lipid A, a phosphorylated glycolipid that anchors the lipopolysaccharide to the outer membrane of the cell. The protein is Lipid-A-disaccharide synthase of Coxiella burnetii (strain CbuK_Q154) (Coxiella burnetii (strain Q154)).